Here is a 219-residue protein sequence, read N- to C-terminus: Sugar fermentation stimulation protein homolog (219 aa).

Belongs to the SfsA family.

In Archaeoglobus fulgidus (strain ATCC 49558 / DSM 4304 / JCM 9628 / NBRC 100126 / VC-16), this protein is Sugar fermentation stimulation protein homolog.